The following is a 76-amino-acid chain: ATP synthase subunit 9, mitochondrial (76 aa).

2 helical membrane-spanning segments follow: residues 14-34 (IATI…AALI) and 52-72 (ILGF…SFLL).

Belongs to the ATPase C chain family. As to quaternary structure, F-type ATPases have 2 components, CF(1) - the catalytic core - and CF(0) - the membrane proton channel. CF(1) has five subunits: alpha(3), beta(3), gamma(1), delta(1), epsilon(1). CF(0) has three main subunits: a, b and c.

The protein resides in the mitochondrion membrane. Mitochondrial membrane ATP synthase (F(1)F(0) ATP synthase or Complex V) produces ATP from ADP in the presence of a proton gradient across the membrane which is generated by electron transport complexes of the respiratory chain. F-type ATPases consist of two structural domains, F(1) - containing the extramembraneous catalytic core and F(0) - containing the membrane proton channel, linked together by a central stalk and a peripheral stalk. During catalysis, ATP synthesis in the catalytic domain of F(1) is coupled via a rotary mechanism of the central stalk subunits to proton translocation. Part of the complex F(0) domain. A homomeric c-ring of probably 10 subunits is part of the complex rotary element. The polypeptide is ATP synthase subunit 9, mitochondrial (ATP9) (Wickerhamomyces canadensis (Yeast)).